The chain runs to 399 residues: Tryptophan synthase beta chain (399 aa).

At Lys-90 the chain carries N6-(pyridoxal phosphate)lysine.

It belongs to the TrpB family. In terms of assembly, tetramer of two alpha and two beta chains. Pyridoxal 5'-phosphate is required as a cofactor.

It catalyses the reaction (1S,2R)-1-C-(indol-3-yl)glycerol 3-phosphate + L-serine = D-glyceraldehyde 3-phosphate + L-tryptophan + H2O. Its pathway is amino-acid biosynthesis; L-tryptophan biosynthesis; L-tryptophan from chorismate: step 5/5. Functionally, the beta subunit is responsible for the synthesis of L-tryptophan from indole and L-serine. This chain is Tryptophan synthase beta chain, found in Phocaeicola vulgatus (strain ATCC 8482 / DSM 1447 / JCM 5826 / CCUG 4940 / NBRC 14291 / NCTC 11154) (Bacteroides vulgatus).